The chain runs to 433 residues: Probable phosphoglucosamine mutase (433 aa).

Ser91 acts as the Phosphoserine intermediate in catalysis. Positions 91, 229, 231, and 233 each coordinate Mg(2+). A Phosphoserine modification is found at Ser91.

This sequence belongs to the phosphohexose mutase family. It depends on Mg(2+) as a cofactor. In terms of processing, activated by phosphorylation.

The catalysed reaction is alpha-D-glucosamine 1-phosphate = D-glucosamine 6-phosphate. Catalyzes the conversion of glucosamine-6-phosphate to glucosamine-1-phosphate. In Methanococcoides burtonii (strain DSM 6242 / NBRC 107633 / OCM 468 / ACE-M), this protein is Probable phosphoglucosamine mutase.